Consider the following 201-residue polypeptide: Imidazoleglycerol-phosphate dehydratase (201 aa).

It belongs to the imidazoleglycerol-phosphate dehydratase family.

The protein resides in the cytoplasm. It catalyses the reaction D-erythro-1-(imidazol-4-yl)glycerol 3-phosphate = 3-(imidazol-4-yl)-2-oxopropyl phosphate + H2O. It participates in amino-acid biosynthesis; L-histidine biosynthesis; L-histidine from 5-phospho-alpha-D-ribose 1-diphosphate: step 6/9. This Prochlorococcus marinus subsp. pastoris (strain CCMP1986 / NIES-2087 / MED4) protein is Imidazoleglycerol-phosphate dehydratase.